Consider the following 236-residue polypeptide: UPF0173 metal-dependent hydrolase Mnod_3315 (236 aa).

The protein belongs to the UPF0173 family.

The protein is UPF0173 metal-dependent hydrolase Mnod_3315 of Methylobacterium nodulans (strain LMG 21967 / CNCM I-2342 / ORS 2060).